A 131-amino-acid polypeptide reads, in one-letter code: Fluoride-specific ion channel FluC 2 (131 aa).

The next 4 membrane-spanning stretches (helical) occupy residues 5–25 (FGVA…SLLV), 39–59 (LATL…TTLA), 70–90 (LAVG…AWES), and 104–124 (LYVL…RALA). Residues G78 and T81 each coordinate Na(+).

Belongs to the fluoride channel Fluc/FEX (TC 1.A.43) family.

Its subcellular location is the cell membrane. The enzyme catalyses fluoride(in) = fluoride(out). With respect to regulation, na(+) is not transported, but it plays an essential structural role and its presence is essential for fluoride channel function. Functionally, fluoride-specific ion channel. Important for reducing fluoride concentration in the cell, thus reducing its toxicity. The polypeptide is Fluoride-specific ion channel FluC 2 (Deinococcus geothermalis (strain DSM 11300 / CIP 105573 / AG-3a)).